A 102-amino-acid chain; its full sequence is Large ribosomal subunit protein eL21 (102 aa).

Basic residues predominate over residues 1–21 (MVRRSKGFRSRTRKKLRKKPR). Positions 1-33 (MVRRSKGFRSRTRKKLRKKPRERGLSPLGPMTQ) are disordered.

The protein belongs to the eukaryotic ribosomal protein eL21 family.

The protein is Large ribosomal subunit protein eL21 of Methanopyrus kandleri (strain AV19 / DSM 6324 / JCM 9639 / NBRC 100938).